The following is a 227-amino-acid chain: Cytochrome c oxidase subunit 2 (227 aa).

At 1-14 (MAYPFELGFQDATS) the chain is on the mitochondrial intermembrane side. Residues 15 to 45 (PIMEELLHFHDHTLMIVFLISSLVLYIISLM) form a helical membrane-spanning segment. At 46–59 (LTTKLTHTSTMDAQ) the chain is on the mitochondrial matrix side. A helical membrane pass occupies residues 60 to 87 (EVETIWTILPAIILILIALPSLRILYMM). At 88 to 227 (DEINDPSLTV…HFENWSSSML (140 aa)) the chain is on the mitochondrial intermembrane side. 6 residues coordinate Cu cation: histidine 161, cysteine 196, glutamate 198, cysteine 200, histidine 204, and methionine 207. Glutamate 198 lines the Mg(2+) pocket.

The protein belongs to the cytochrome c oxidase subunit 2 family. Component of the cytochrome c oxidase (complex IV, CIV), a multisubunit enzyme composed of 14 subunits. The complex is composed of a catalytic core of 3 subunits MT-CO1, MT-CO2 and MT-CO3, encoded in the mitochondrial DNA, and 11 supernumerary subunits COX4I, COX5A, COX5B, COX6A, COX6B, COX6C, COX7A, COX7B, COX7C, COX8 and NDUFA4, which are encoded in the nuclear genome. The complex exists as a monomer or a dimer and forms supercomplexes (SCs) in the inner mitochondrial membrane with NADH-ubiquinone oxidoreductase (complex I, CI) and ubiquinol-cytochrome c oxidoreductase (cytochrome b-c1 complex, complex III, CIII), resulting in different assemblies (supercomplex SCI(1)III(2)IV(1) and megacomplex MCI(2)III(2)IV(2)). Found in a complex with TMEM177, COA6, COX18, COX20, SCO1 and SCO2. Interacts with TMEM177 in a COX20-dependent manner. Interacts with COX20. Interacts with COX16. The cofactor is Cu cation.

The protein localises to the mitochondrion inner membrane. It carries out the reaction 4 Fe(II)-[cytochrome c] + O2 + 8 H(+)(in) = 4 Fe(III)-[cytochrome c] + 2 H2O + 4 H(+)(out). Component of the cytochrome c oxidase, the last enzyme in the mitochondrial electron transport chain which drives oxidative phosphorylation. The respiratory chain contains 3 multisubunit complexes succinate dehydrogenase (complex II, CII), ubiquinol-cytochrome c oxidoreductase (cytochrome b-c1 complex, complex III, CIII) and cytochrome c oxidase (complex IV, CIV), that cooperate to transfer electrons derived from NADH and succinate to molecular oxygen, creating an electrochemical gradient over the inner membrane that drives transmembrane transport and the ATP synthase. Cytochrome c oxidase is the component of the respiratory chain that catalyzes the reduction of oxygen to water. Electrons originating from reduced cytochrome c in the intermembrane space (IMS) are transferred via the dinuclear copper A center (CU(A)) of subunit 2 and heme A of subunit 1 to the active site in subunit 1, a binuclear center (BNC) formed by heme A3 and copper B (CU(B)). The BNC reduces molecular oxygen to 2 water molecules using 4 electrons from cytochrome c in the IMS and 4 protons from the mitochondrial matrix. The polypeptide is Cytochrome c oxidase subunit 2 (MT-CO2) (Neotamias bulleri (Buller's chipmunk)).